Consider the following 386-residue polypeptide: 2,3,4,5-tetrahydropyridine-2,6-dicarboxylate N-succinyltransferase (386 aa).

Residue glutamate 257 is the Acyl-anhydride intermediate of the active site. Succinyl-CoA is bound by residues arginine 259, glycine 274, serine 277, alanine 300, 315 to 316 (DA), glycine 323, lysine 349, and 362 to 365 (RQDS).

This sequence belongs to the type 2 tetrahydrodipicolinate N-succinyltransferase family. Homotrimer.

Its subcellular location is the cytoplasm. The catalysed reaction is (S)-2,3,4,5-tetrahydrodipicolinate + succinyl-CoA + H2O = (S)-2-succinylamino-6-oxoheptanedioate + CoA. Its pathway is amino-acid biosynthesis; L-lysine biosynthesis via DAP pathway; LL-2,6-diaminopimelate from (S)-tetrahydrodipicolinate (succinylase route): step 1/3. Catalyzes the conversion of the cyclic tetrahydrodipicolinate (THDP) into the acyclic N-succinyl-L-2-amino-6-oxopimelate using succinyl-CoA. The sequence is that of 2,3,4,5-tetrahydropyridine-2,6-dicarboxylate N-succinyltransferase from Campylobacter jejuni subsp. jejuni serotype O:2 (strain ATCC 700819 / NCTC 11168).